A 585-amino-acid chain; its full sequence is ATP-dependent lipid A-core flippase (585 aa).

6 consecutive transmembrane segments (helical) span residues L23–I43, I64–T84, A140–Y160, W163–V183, I247–I267, and F273–L293. The ABC transmembrane type-1 domain maps to V27 to K308. In terms of domain architecture, ABC transporter spans L340–L576. G374 to S381 lines the ATP pocket.

The protein belongs to the ABC transporter superfamily. Lipid exporter (TC 3.A.1.106) family. As to quaternary structure, homodimer.

It localises to the cell inner membrane. The catalysed reaction is ATP + H2O + lipid A-core oligosaccharideSide 1 = ADP + phosphate + lipid A-core oligosaccharideSide 2.. Involved in lipopolysaccharide (LPS) biosynthesis. Translocates lipid A-core from the inner to the outer leaflet of the inner membrane. Transmembrane domains (TMD) form a pore in the inner membrane and the ATP-binding domain (NBD) is responsible for energy generation. In Pseudoalteromonas atlantica (strain T6c / ATCC BAA-1087), this protein is ATP-dependent lipid A-core flippase.